Reading from the N-terminus, the 376-residue chain is Nucleoside diphosphate kinase homolog 7 (376 aa).

The DM10 domain occupies 3 to 91 (HSERFVFIAE…YTARQLGSRK (89 aa)).

Belongs to the NDK family. As to quaternary structure, component of sperm flagellar doublet microtubules. Component of the gamma-tubulin ring complex. Post-translationally, undergoes autophosphorylation. Expressed in airway epithelial cells.

It localises to the cytoplasm. The protein localises to the cytoskeleton. Its subcellular location is the microtubule organizing center. It is found in the centrosome. The protein resides in the nucleus. It localises to the spindle. The protein localises to the cilium axoneme. Its subcellular location is the flagellum axoneme. It is found in the cell projection. The protein resides in the cilium. Its function is as follows. Possesses an intrinsic kinase activity. Displays 3'-5' exonuclease activity with a preference for single-stranded DNA. Does not seem to have nucleoside diphosphate kinase activity. Functional component of the gamma-tubulin ring complex, implicated in the regulation of the microtubule-nucleating activity of the gamma-tubulin ring complex in centrosomes, in a kinase activity-dependent manner. Part of the dynein-decorated doublet microtubules (DMTs) in cilia axoneme, which is required for motile cilia beating. The chain is Nucleoside diphosphate kinase homolog 7 from Homo sapiens (Human).